We begin with the raw amino-acid sequence, 77 residues long: Protein AC145 (77 aa).

Its subcellular location is the host nucleus. The protein localises to the virion. Its function is as follows. Plays a role in primary oral infection of the host. The chain is Protein AC145 from Autographa californica nuclear polyhedrosis virus (AcMNPV).